The primary structure comprises 150 residues: NmrA-like family domain-containing protein 1 (150 aa).

Residues 7 to 12 (GATGAQ), 33 to 37 (RNPEQ), and Lys71 contribute to the NADP(+) site.

The protein belongs to the NmrA-type oxidoreductase family. In terms of assembly, homodimer. Interacts with ASS1. Interaction is enhanced by low NADPH/NADP(+) ratios, which results in inhibition of ASS1 activity.

The protein resides in the cytoplasm. It localises to the perinuclear region. The protein localises to the nucleus. In terms of biological role, redox sensor protein. Undergoes restructuring and subcellular redistribution in response to changes in intracellular NADPH/NADP(+) levels. At low NADPH concentrations the protein is found mainly as a monomer, and binds argininosuccinate synthase (ASS1), the enzyme involved in nitric oxide synthesis. Association with ASS1 impairs its activity and reduces the production of nitric oxide, which subsecuently prevents apoptosis. Under normal NADPH concentrations, the protein is found as a dimer and hides the binding site for ASS1. The homodimer binds one molecule of NADPH. Has higher affinity for NADPH than for NADP(+). Binding to NADPH is necessary to form a stable dimer. This chain is NmrA-like family domain-containing protein 1, found in Rattus norvegicus (Rat).